The sequence spans 185 residues: Protein-lysine palmitoyltransferase CyaC (185 aa).

Catalysis depends on residues His-33 and Asp-102.

This sequence belongs to the RTX toxin acyltransferase family. As to quaternary structure, homodimer.

The protein resides in the cytoplasm. The catalysed reaction is hexadecanoyl-[ACP] + L-lysyl-[protein] = N(6)-hexadecanoyl-L-lysyl-[protein] + holo-[ACP] + H(+). It carries out the reaction (9Z)-hexadecenoyl-[ACP] + L-lysyl-[protein] = N(6)-[(9Z)-hexadecenoyl]-L-lysyl-[protein] + holo-[ACP] + H(+). Functionally, protein-lysine palmitoyltransferase that catalyzes palmitoylation of the protoxin (CyaA) at two internal lysine residues, thereby converting it to the active toxin. The sequence is that of Protein-lysine palmitoyltransferase CyaC from Bordetella bronchiseptica (strain ATCC BAA-588 / NCTC 13252 / RB50) (Alcaligenes bronchisepticus).